A 405-amino-acid polypeptide reads, in one-letter code: Eukaryotic translation initiation factor 5 (405 aa).

27–34 is a binding site for GTP; sequence GRGNGIKT. The disordered stretch occupies residues 143–202; the sequence is NPPDSVSGSKKKKKAATASANVRGGGLSISDIAQGKSQNAPSDGTGSSTPQHHDEDEDEL. Phosphoserine is present on residues S170 and S172. The span at 177 to 192 shows a compositional bias: polar residues; that stretch reads GKSQNAPSDGTGSSTP. Position 191 is a phosphothreonine (T191). A Phosphoserine modification is found at S228. Residues 241–402 enclose the W2 domain; that stretch reads VNSELTQLDE…ETAESDDDEE (162 aa). Position 317 is a phosphothreonine (T317). At S397 the chain carries Phosphoserine.

This sequence belongs to the eIF-2-beta/eIF-5 family. In terms of assembly, monomer. The factors eIF-1, eIF-2, eIF-3, TIF5/eIF-5 and methionyl-tRNAi form a multifactor complex (MFC) that may bind to the 40S ribosome. TIF32, NIP1 and TIF5/eIF-5 comprise a minimal 40S-ribosome-binding unit. Interacts with NIP1. Interacts with SUI3.

Catalyzes the hydrolysis of GTP bound to the 40S ribosomal initiation complex (40S.mRNA.Met-tRNA[F].eIF-2.GTP) with the subsequent joining of a 60S ribosomal subunit resulting in the release of eIF-2 and the guanine nucleotide. The subsequent joining of a 60S ribosomal subunit results in the formation of a functional 80S initiation complex (80S.mRNA.Met-tRNA[F]). eIF-5 is essential for cell viability. The sequence is that of Eukaryotic translation initiation factor 5 (TIF5) from Saccharomyces cerevisiae (strain ATCC 204508 / S288c) (Baker's yeast).